Consider the following 88-residue polypeptide: YcgL domain-containing protein CGSHiGG_01115 (88 aa).

The region spanning 1-85 is the YcgL domain; the sequence is MLCAIYKSKK…QDDGLFNSLS (85 aa).

The protein is YcgL domain-containing protein CGSHiGG_01115 of Haemophilus influenzae (strain PittGG).